The chain runs to 89 residues: Putative acyl-CoA-binding protein (89 aa).

Positions 3–88 constitute an ACB domain; that stretch reads VEEQFKTSAE…VKELVEKNGL (86 aa). An acyl-CoA-binding positions include Lys-15, 30–34, Lys-52, Lys-56, and Tyr-75; that span reads YSLYK.

It belongs to the ACBP family.

Binds medium- and long-chain acyl-CoA esters with very high affinity and may function as an intracellular carrier of acyl-CoA esters. The chain is Putative acyl-CoA-binding protein from Hypsibius exemplaris (Freshwater tardigrade).